The sequence spans 184 residues: MKIAQEIRAGNVIMHGKDPMIVLKTEYARGGRGAATVRMKLKSLLGNMGTEVVFKADDKIDNVILDKKECTYSYFADPMYVWMDADFNQYEVEATNMGDAINYLEDGMEAEVVFYDGKAISCELPTSVEREITWTEPAVKGDTSGKVLKPAKIATGFEVPVPLFVSQGDKIEIDTRTGEYRKRV.

Belongs to the elongation factor P family.

It localises to the cytoplasm. Its pathway is protein biosynthesis; polypeptide chain elongation. Functionally, involved in peptide bond synthesis. Stimulates efficient translation and peptide-bond synthesis on native or reconstituted 70S ribosomes in vitro. Probably functions indirectly by altering the affinity of the ribosome for aminoacyl-tRNA, thus increasing their reactivity as acceptors for peptidyl transferase. This chain is Elongation factor P, found in Delftia acidovorans (strain DSM 14801 / SPH-1).